The sequence spans 257 residues: Urease accessory protein UreD 3 (257 aa).

The disordered stretch occupies residues 1–22 (MSVRATARLRAEPDGRDGTALP).

Belongs to the UreD family. In terms of assembly, ureD, UreF and UreG form a complex that acts as a GTP-hydrolysis-dependent molecular chaperone, activating the urease apoprotein by helping to assemble the nickel containing metallocenter of UreC. The UreE protein probably delivers the nickel.

It is found in the cytoplasm. Functionally, required for maturation of urease via the functional incorporation of the urease nickel metallocenter. The polypeptide is Urease accessory protein UreD 3 (Streptomyces griseus subsp. griseus (strain JCM 4626 / CBS 651.72 / NBRC 13350 / KCC S-0626 / ISP 5235)).